Consider the following 591-residue polypeptide: Phenylalanine--tRNA ligase beta subunit (591 aa).

In terms of domain architecture, B5 spans 304–380; the sequence is LSYREMTVTT…VAFGYNNLIT (77 aa). Asp-358, Asp-364, Glu-367, and Asp-368 together coordinate Mg(2+).

Belongs to the phenylalanyl-tRNA synthetase beta subunit family. Type 2 subfamily. In terms of assembly, tetramer of two alpha and two beta subunits. Requires Mg(2+) as cofactor.

It localises to the cytoplasm. It catalyses the reaction tRNA(Phe) + L-phenylalanine + ATP = L-phenylalanyl-tRNA(Phe) + AMP + diphosphate + H(+). This chain is Phenylalanine--tRNA ligase beta subunit, found in Caenorhabditis elegans.